We begin with the raw amino-acid sequence, 203 residues long: Holliday junction branch migration complex subunit RuvA (203 aa).

Residues 1–63 (MIVSLRGTVE…EESQTLYGFT (63 aa)) form a domain I region. The domain II stretch occupies residues 64–142 (DDASRRMFVL…GFNDGIPAAA (79 aa)). Residues 143–150 (QPQLSIAV) are flexible linker. A domain III region spans residues 150-203 (VDQAVQEQVLEALVGLGFSEKIALPVLSRVLRDSPELSKSQALRAALSELGTKN).

This sequence belongs to the RuvA family. Homotetramer. Forms an RuvA(8)-RuvB(12)-Holliday junction (HJ) complex. HJ DNA is sandwiched between 2 RuvA tetramers; dsDNA enters through RuvA and exits via RuvB. An RuvB hexamer assembles on each DNA strand where it exits the tetramer. Each RuvB hexamer is contacted by two RuvA subunits (via domain III) on 2 adjacent RuvB subunits; this complex drives branch migration. In the full resolvosome a probable DNA-RuvA(4)-RuvB(12)-RuvC(2) complex forms which resolves the HJ.

It localises to the cytoplasm. In terms of biological role, the RuvA-RuvB-RuvC complex processes Holliday junction (HJ) DNA during genetic recombination and DNA repair, while the RuvA-RuvB complex plays an important role in the rescue of blocked DNA replication forks via replication fork reversal (RFR). RuvA specifically binds to HJ cruciform DNA, conferring on it an open structure. The RuvB hexamer acts as an ATP-dependent pump, pulling dsDNA into and through the RuvAB complex. HJ branch migration allows RuvC to scan DNA until it finds its consensus sequence, where it cleaves and resolves the cruciform DNA. The sequence is that of Holliday junction branch migration complex subunit RuvA from Corynebacterium diphtheriae (strain ATCC 700971 / NCTC 13129 / Biotype gravis).